The chain runs to 262 residues: Type III pantothenate kinase (262 aa).

9–16 (DAGNSRIK) serves as a coordination point for ATP. Residues tyrosine 96 and 103-106 (GSDR) each bind substrate. Aspartate 105 acts as the Proton acceptor in catalysis. Position 129 (threonine 129) interacts with ATP. Threonine 189 is a substrate binding site.

The protein belongs to the type III pantothenate kinase family. As to quaternary structure, homodimer. NH4(+) is required as a cofactor. It depends on K(+) as a cofactor.

The protein localises to the cytoplasm. It carries out the reaction (R)-pantothenate + ATP = (R)-4'-phosphopantothenate + ADP + H(+). It participates in cofactor biosynthesis; coenzyme A biosynthesis; CoA from (R)-pantothenate: step 1/5. In terms of biological role, catalyzes the phosphorylation of pantothenate (Pan), the first step in CoA biosynthesis. In Burkholderia multivorans (strain ATCC 17616 / 249), this protein is Type III pantothenate kinase.